We begin with the raw amino-acid sequence, 688 residues long: Bifunctional protein GAL10 (688 aa).

Positions Met-1 to Ile-346 are galactowaldenase. Position 6 to 37 (Tyr-6 to Leu-37) interacts with NAD(+). The segment at Lys-347 to Leu-688 is mutarotase. His-525 functions as the For mutarotase activity in the catalytic mechanism.

It in the N-terminal section; belongs to the NAD(P)-dependent epimerase/dehydratase family. In the C-terminal section; belongs to the aldose epimerase family. It depends on NAD(+) as a cofactor.

The catalysed reaction is UDP-alpha-D-glucose = UDP-alpha-D-galactose. It carries out the reaction alpha-D-glucose = beta-D-glucose. It functions in the pathway carbohydrate metabolism; galactose metabolism. It participates in carbohydrate metabolism; hexose metabolism. Its function is as follows. Mutarotase converts alpha-aldose to the beta-anomer. It is active on D-glucose, L-arabinose, D-xylose, D-galactose, maltose and lactose. This chain is Bifunctional protein GAL10 (GAL10), found in Kluyveromyces lactis (strain ATCC 8585 / CBS 2359 / DSM 70799 / NBRC 1267 / NRRL Y-1140 / WM37) (Yeast).